The following is a 366-amino-acid chain: Chorismate synthase (366 aa).

R48 and R54 together coordinate NADP(+). Residues 125-127, 238-239, G278, 293-297, and R319 contribute to the FMN site; these read RSS, NA, and KPTSS.

Belongs to the chorismate synthase family. In terms of assembly, homotetramer. FMNH2 is required as a cofactor.

The enzyme catalyses 5-O-(1-carboxyvinyl)-3-phosphoshikimate = chorismate + phosphate. It participates in metabolic intermediate biosynthesis; chorismate biosynthesis; chorismate from D-erythrose 4-phosphate and phosphoenolpyruvate: step 7/7. Its function is as follows. Catalyzes the anti-1,4-elimination of the C-3 phosphate and the C-6 proR hydrogen from 5-enolpyruvylshikimate-3-phosphate (EPSP) to yield chorismate, which is the branch point compound that serves as the starting substrate for the three terminal pathways of aromatic amino acid biosynthesis. This reaction introduces a second double bond into the aromatic ring system. This chain is Chorismate synthase, found in Neisseria meningitidis serogroup A / serotype 4A (strain DSM 15465 / Z2491).